Reading from the N-terminus, the 840-residue chain is Lethal(3)malignant brain tumor-like protein 1 (840 aa).

Position 117 is a phosphoserine (Ser-117). Positions 127-269 are disordered; the sequence is EYEDGGAPAG…WSSSQPATGE (143 aa). Residues 156–165 are compositionally biased toward acidic residues; it reads PNQDPPEDDS. Polar residues predominate over residues 200-210; sequence VENSSGSTSAS. A compositionally biased stretch (basic and acidic residues) spans 236-247; the sequence is AMEKQEEGKDPE. Residues 250–266 show a composition bias toward polar residues; it reads PTASTPESEEWSSSQPA. MBT repeat units lie at residues 274-374, 382-481, and 490-585; these read WSWE…LQPP, FSWS…LTPP, and FCWE…LQPP. Positions 447-454 are interaction with monomethylated and dimethylated peptides; it reads FDNWDDTY. Residues 580–605 are disordered; that stretch reads HPLQPPLGPREPSSASPGGCPPLSYR. The CCHHC-type zinc finger occupies 613-656; it reads SKYSFHHRKCPTPGCDGSGHVTGKFTAHHCLSGCPLAERNQSRL. Zn(2+) is bound by residues Cys-622, Cys-627, His-640, and Cys-646. A disordered region spans residues 657-697; that stretch reads KAELSDSEASARKKNLSGFSPRKKPRHHGRIGRPPKYRKIP. A compositionally biased stretch (basic residues) spans 677-695; sequence PRKKPRHHGRIGRPPKYRK.

In terms of assembly, homodimer. Interacts with RB1/RB (when monomethylated at 'Lys-860'). Interacts with p53/TP53 (when monomethylated at 'Lys-382'). Interacts with CBX3, ETV6, KMT5A and VCP/p97. In terms of processing, ubiquitinated in a VCP/p97-dependent way following DNA damage, leading to its removal from DNA damage sites, promoting accessibility of H4K20me2 mark for DNA repair protein TP53BP1, which is then recruited to DNA damage sites. Widely expressed. Expression is reduced in colorectal cancer cell line SW480 and promyelocytic leukemia cell line HL-60.

The protein localises to the nucleus. Its function is as follows. Polycomb group (PcG) protein that specifically recognizes and binds mono- and dimethyllysine residues on target proteins, thereby acting as a 'reader' of a network of post-translational modifications. PcG proteins maintain the transcriptionally repressive state of genes: acts as a chromatin compaction factor by recognizing and binding mono- and dimethylated histone H1b/H1-4 at 'Lys-26' (H1bK26me1 and H1bK26me2) and histone H4 at 'Lys-20' (H4K20me1 and H4K20me2), leading to condense chromatin and repress transcription. Recognizes and binds p53/TP53 monomethylated at 'Lys-382', leading to repress p53/TP53-target genes. Also recognizes and binds RB1/RB monomethylated at 'Lys-860'. Participates in the ETV6-mediated repression. Probably plays a role in cell proliferation. Overexpression induces multinucleated cells, suggesting that it is required to accomplish normal mitosis. The chain is Lethal(3)malignant brain tumor-like protein 1 (L3MBTL1) from Homo sapiens (Human).